Reading from the N-terminus, the 163-residue chain is Retinoic acid receptor responder protein 2 (163 aa).

The first 20 residues, 1–20, serve as a signal peptide directing secretion; it reads MKYLLISLALWLGMVGIHGT. Disulfide bonds link Cys79-Cys89, Cys100-Cys119, and Cys103-Cys135. Residues 158 to 163 constitute a propeptide that is removed on maturation; sequence RALKHK.

Secreted in an inactive precursor form, prochemerin, which is proteolytically processed by a variety of extracellular proteases to generate forms with differing levels of bioactivity. For example, the removal of six amino acids results in chemerin-157, which exhibits the highest activity, while removal of seven amino acids results in chemerin-156 which has slightly less activity. Some proteases are able to cleave at more than one site and chemerin forms may be sequentially processed by different enzymes to modulate activity levels. The coordinated expression and activity of chemerin-modifying enzymes is essential for regulating its bioactivation, inactivation and, consequently, biological function. Cathepsin G cleaves seven C-terminal amino acids from prochemerin (chemerin-156), elastase is able to cleave six (chemerin-157), eight (chemerin-155) or eleven (chemerin-152), plasmin cleaves five amino acids (chemerin-158), and tryptase cleaves five (chemerin-158) or eight (chemerin-155). Multiple cleavages might be required to fully activate chemerin, with an initial tryptase cleavage resulting in chemerin with low activity (chemerin-158), and a second cleavage by carboxypeptidase N or B producing highly active chemerin (chemerin-157).

The protein resides in the secreted. Its function is as follows. Adipocyte-secreted protein (adipokine) that regulates adipogenesis, metabolism and inflammation through activation of the chemokine-like receptor 1 (CMKLR1). Also acts as a ligand for CMKLR2. Can also bind to C-C chemokine receptor-like 2 (CCRL2), but with a lower affinity than it does to CMKLR1 or CMKLR2. Positively regulates adipocyte differentiation, modulates the expression of adipocyte genes involved in lipid and glucose metabolism and might play a role in angiogenesis, a process essential for the expansion of white adipose tissue. Also acts as a pro-inflammatory adipokine, causing an increase in secretion of pro-inflammatory and prodiabetic adipokines, which further impair adipose tissue metabolic function and have negative systemic effects including impaired insulin sensitivity, altered glucose and lipid metabolism, and a decrease in vascular function in other tissues. Can have both pro- and anti-inflammatory properties depending on the modality of enzymatic cleavage by different classes of proteases. Acts as a chemotactic factor for leukocyte populations expressing CMKLR1, particularly immature plasmacytoid dendritic cells, but also immature myeloid DCs, macrophages and natural killer cells. Exerts an anti-inflammatory role by preventing TNF/TNFA-induced VCAM1 expression and monocytes adhesion in vascular endothelial cells. The effect is mediated via inhibiting activation of NF-kappa-B and CRK/p38 through stimulation of AKT1/NOS3 signaling and nitric oxide production. Its dual role in inflammation and metabolism might provide a link Exhibits an antimicrobial function in the skin. The protein is Retinoic acid receptor responder protein 2 (RARRES2) of Cricetulus griseus (Chinese hamster).